The chain runs to 904 residues: Protein translocase subunit SecA (904 aa).

ATP contacts are provided by residues glutamine 89, 107-111, and aspartate 496; that span reads GEGKT. The tract at residues 870-904 is disordered; sequence GGFQELSSGTPSPTVTVTTSSGGGTERKTSRRRKR. Low complexity predominate over residues 876–889; the sequence is SSGTPSPTVTVTTS.

Belongs to the SecA family. As to quaternary structure, monomer and homodimer. Part of the essential Sec protein translocation apparatus which comprises SecA, SecYEG and auxiliary proteins SecDF. Other proteins may also be involved.

The protein resides in the cell inner membrane. It is found in the cytoplasm. It catalyses the reaction ATP + H2O + cellular proteinSide 1 = ADP + phosphate + cellular proteinSide 2.. Functionally, part of the Sec protein translocase complex. Interacts with the SecYEG preprotein conducting channel. Has a central role in coupling the hydrolysis of ATP to the transfer of proteins into and across the cell membrane, serving as an ATP-driven molecular motor driving the stepwise translocation of polypeptide chains across the membrane. This is Protein translocase subunit SecA from Leptospira borgpetersenii serovar Hardjo-bovis (strain L550).